Reading from the N-terminus, the 162-residue chain is Translocator protein 2 (162 aa).

The next 5 membrane-spanning stretches (helical) occupy residues leucine 3–isoleucine 23, valine 44–tryptophan 64, leucine 79–alanine 99, glycine 103–tryptophan 123, and leucine 129–tyrosine 149.

This sequence belongs to the TspO/BZRP family. As to quaternary structure, homotetramer. May also form homodimer. In terms of tissue distribution, expressed in liver, bone marrow and spleen. In spleen, detected in red pulp but not in white pulp.

It is found in the endoplasmic reticulum membrane. Its subcellular location is the cell membrane. Its function is as follows. Cholesterol-binding protein involved in the redistribution of cholesterol from lipid droplets to the endoplasmic reticulum. Required to meet cholesterol demands during erythropoietic differentiation. May play a role in transport processes at the plasma membrane of erythrocytes, including regulating VDAC-mediated ATP export, and import of the heme precursors protoporphyrin IX and 5-aminolevulinic acid. The chain is Translocator protein 2 (Tspo2) from Mus musculus (Mouse).